Consider the following 435-residue polypeptide: Probable exopolygalacturonase B (435 aa).

Positions 1 to 15 (MKFFLATLFASAVSS) are cleaved as a signal peptide. Residues Asn-59, Asn-184, and Asn-224 are each glycosylated (N-linked (GlcNAc...) asparagine). PbH1 repeat units lie at residues 208-239 (SKDV…DSLN), 240-261 (VDGL…SPKP), 262-283 (NTTN…SMGS), 294-315 (IEHA…RLKA), and 326-347 (INNI…VLDQ). The active-site Proton donor is the Asp-254. A disulfide bridge links Cys-256 with Cys-273. Residues Asn-262 and Asn-274 are each glycosylated (N-linked (GlcNAc...) asparagine). His-277 is an active-site residue. Asn-301, Asn-328, Asn-365, and Asn-373 each carry an N-linked (GlcNAc...) asparagine glycan. Residues 366–388 (VTNILFENISGTSSGKNGKVVAD) form a PbH1 6 repeat. Cysteines 391 and 397 form a disulfide. An N-linked (GlcNAc...) asparagine glycan is attached at Asn-406.

Belongs to the glycosyl hydrolase 28 family.

The protein resides in the secreted. It catalyses the reaction [(1-&gt;4)-alpha-D-galacturonosyl](n) + H2O = alpha-D-galacturonate + [(1-&gt;4)-alpha-D-galacturonosyl](n-1). Functionally, specific in hydrolyzing the terminal glycosidic bond of polygalacturonic acid and oligogalacturonates. This Aspergillus oryzae (strain ATCC 42149 / RIB 40) (Yellow koji mold) protein is Probable exopolygalacturonase B (pgxB).